The chain runs to 781 residues: Serine/threonine-protein kinase PLK4 (781 aa).

A Protein kinase domain is found at 14–268; that stretch reads YEVQHLLGKG…LEQVLRHPFM (255 aa). Residues 20 to 28 and K43 each bind ATP; that span reads LGKGGFACV. D139 (proton acceptor) is an active-site residue. Residues 397 to 514 form the Cryptic POLO box 1 (CPB1) domain; that stretch reads TEHISVPPLN…ARFVGLVKSK (118 aa). Residues 463–486 are disordered; it reads QPDPGRGLPIQEQTSETHSSGTDN. Residues 473-486 are compositionally biased toward polar residues; it reads QEQTSETHSSGTDN. The region spanning 515-618 is the Cryptic POLO box 2 (CPB2) domain; that stretch reads TPKVTYFSAL…GRRPVVEVLP (104 aa). Residues 672 to 751 enclose the POLO box domain; sequence PIKRLNVPGV…LPQVQMKLRC (80 aa).

The protein belongs to the protein kinase superfamily. Ser/Thr protein kinase family. CDC5/Polo subfamily. In terms of assembly, homodimer. In terms of processing, ubiquitinated by the SCF(Slimb) ubiquitin ligase complex; leading to its degradation by the proteasome during interphase and regulating centriole number and ensuring the block to centriole reduplication.

The protein resides in the cytoplasm. It localises to the cytoskeleton. Its subcellular location is the microtubule organizing center. The protein localises to the centrosome. It is found in the centriole. The catalysed reaction is L-seryl-[protein] + ATP = O-phospho-L-seryl-[protein] + ADP + H(+). The enzyme catalyses L-threonyl-[protein] + ATP = O-phospho-L-threonyl-[protein] + ADP + H(+). In terms of biological role, serine/threonine-protein kinase that plays a central role in centriole duplication. Able to trigger procentriole formation on the surface of the mother centriole cylinder, using mother centriole as a platform, leading to the recruitment of centriole biogenesis proteins such as sas-6. When overexpressed, it is able to induce centrosome amplification through the simultaneous generation of multiple procentrioles adjoining each parental centriole during S phase. Centrosome amplification following overexpression can initiate tumorigenesis, highlighting the importance of centrosome regulation in cancers. The polypeptide is Serine/threonine-protein kinase PLK4 (SAK) (Drosophila virilis (Fruit fly)).